A 151-amino-acid chain; its full sequence is Large ribosomal subunit protein uL15 (151 aa).

The disordered stretch occupies residues 1 to 58 (MTSISLDSLKPNKGARKRKTRKGRGIAAGQGASCGFGMRGQKSRSGRPTRPGFEGGQM). Basic residues predominate over residues 13–24 (KGARKRKTRKGR). Residues 26 to 38 (IAAGQGASCGFGM) show a composition bias toward gly residues.

This sequence belongs to the universal ribosomal protein uL15 family. As to quaternary structure, part of the 50S ribosomal subunit.

Binds to the 23S rRNA. This chain is Large ribosomal subunit protein uL15, found in Prochlorococcus marinus (strain SARG / CCMP1375 / SS120).